Here is a 179-residue protein sequence, read N- to C-terminus: Proteasome chaperone 3 (179 aa).

It belongs to the PSMG3 family. Component of the 20S proteasome chaperone. Forms a heterodimer with POC4 that binds to proteasome precursors. Interacts with POP2.

Functionally, involved in 20S proteasome assembly, facilitating the alpha-ring formation. This Saccharomyces cerevisiae (strain ATCC 204508 / S288c) (Baker's yeast) protein is Proteasome chaperone 3 (IRC25).